Here is a 294-residue protein sequence, read N- to C-terminus: MHPRFQTAFAQLADNLQSALEPILADKYFPALLTGEQVSSLKSATGLDEDALAFALLPLAAACARTPLSNFNVGAIARGVSGTWYFGANMEFIGATMQQTVHAEQSAISHAWLSGEKALAAITVNYTPCGHCRQFMNELNSGLDLRIHLPGREAHALRDYLPDAFGPKDLEIKTLLMDEQDHGYALTGDALSQAAIAAANRSHMPYSKSPSGVALECKDGRIFSGSYAENAAFNPTLPPLQGALILLNLKGYDYPDIQRAVLAEKADAPLIQWDATSATLKALGCHSIDRVLLA.

2 consecutive CMP/dCMP-type deaminase domains span residues 48–168 (DEDA…FGPK) and 186–294 (LTGD…VLLA). 89-91 (NME) contributes to the substrate binding site. His102 contacts Zn(2+). The active-site Proton donor is the Glu104. Zn(2+) contacts are provided by Cys129 and Cys132.

Belongs to the cytidine and deoxycytidylate deaminase family. In terms of assembly, homodimer. Zn(2+) serves as cofactor.

The enzyme catalyses cytidine + H2O + H(+) = uridine + NH4(+). The catalysed reaction is 2'-deoxycytidine + H2O + H(+) = 2'-deoxyuridine + NH4(+). In terms of biological role, this enzyme scavenges exogenous and endogenous cytidine and 2'-deoxycytidine for UMP synthesis. This chain is Cytidine deaminase, found in Escherichia coli (strain K12).